We begin with the raw amino-acid sequence, 397 residues long: Elongation factor Tu (397 aa).

The region spanning 10–207 (KPHVNIGTIG…ACDSYIPEPQ (198 aa)) is the tr-type G domain. The tract at residues 19–26 (GHIDHGKT) is G1. 19 to 26 (GHIDHGKT) provides a ligand contact to GTP. Threonine 26 serves as a coordination point for Mg(2+). A G2 region spans residues 60 to 64 (GITIA). A G3 region spans residues 81-84 (DCPG). GTP is bound by residues 81 to 85 (DCPGH) and 136 to 139 (NKCD). Positions 136–139 (NKCD) are G4. Positions 174–176 (SAL) are G5.

It belongs to the TRAFAC class translation factor GTPase superfamily. Classic translation factor GTPase family. EF-Tu/EF-1A subfamily. In terms of assembly, monomer.

It is found in the cytoplasm. It catalyses the reaction GTP + H2O = GDP + phosphate + H(+). Its function is as follows. GTP hydrolase that promotes the GTP-dependent binding of aminoacyl-tRNA to the A-site of ribosomes during protein biosynthesis. The polypeptide is Elongation factor Tu (Nitratidesulfovibrio vulgaris (strain DSM 19637 / Miyazaki F) (Desulfovibrio vulgaris)).